Reading from the N-terminus, the 206-residue chain is ATP phosphoribosyltransferase (206 aa).

The protein belongs to the ATP phosphoribosyltransferase family. Short subfamily. As to quaternary structure, heteromultimer composed of HisG and HisZ subunits.

The protein resides in the cytoplasm. It catalyses the reaction 1-(5-phospho-beta-D-ribosyl)-ATP + diphosphate = 5-phospho-alpha-D-ribose 1-diphosphate + ATP. The protein operates within amino-acid biosynthesis; L-histidine biosynthesis; L-histidine from 5-phospho-alpha-D-ribose 1-diphosphate: step 1/9. Its function is as follows. Catalyzes the condensation of ATP and 5-phosphoribose 1-diphosphate to form N'-(5'-phosphoribosyl)-ATP (PR-ATP). Has a crucial role in the pathway because the rate of histidine biosynthesis seems to be controlled primarily by regulation of HisG enzymatic activity. This is ATP phosphoribosyltransferase from Wolinella succinogenes (strain ATCC 29543 / DSM 1740 / CCUG 13145 / JCM 31913 / LMG 7466 / NCTC 11488 / FDC 602W) (Vibrio succinogenes).